Consider the following 431-residue polypeptide: Phosphoribosylamine--glycine ligase (431 aa).

The region spanning 109–316 (KDFLARHGIP…LVDLVEAAID (208 aa)) is the ATP-grasp domain. Residue 135–196 (VREKGAPIVV…EEFLDGEEAS (62 aa)) participates in ATP binding. Mg(2+)-binding residues include Glu286 and Asn288.

Belongs to the GARS family. Requires Mg(2+) as cofactor. Mn(2+) is required as a cofactor.

The catalysed reaction is 5-phospho-beta-D-ribosylamine + glycine + ATP = N(1)-(5-phospho-beta-D-ribosyl)glycinamide + ADP + phosphate + H(+). It participates in purine metabolism; IMP biosynthesis via de novo pathway; N(1)-(5-phospho-D-ribosyl)glycinamide from 5-phospho-alpha-D-ribose 1-diphosphate: step 2/2. This chain is Phosphoribosylamine--glycine ligase, found in Xanthomonas campestris pv. campestris (strain ATCC 33913 / DSM 3586 / NCPPB 528 / LMG 568 / P 25).